Reading from the N-terminus, the 22-residue chain is uncharacterized protein (22 aa).

The segment at 1-22 (MHNSIAYDKDGNSTGQKYYAYG) is disordered.

This is an uncharacterized protein from Lactobacillus helveticus (Lactobacillus suntoryeus).